A 140-amino-acid polypeptide reads, in one-letter code: MAIERTFSMIKPDATRRNLTGAIIAKLEEAGLRVVASKRVWMSRREAEGFYAVHKDRPFFGELVEFMSSGPTVVQVLEGENAIAKNREVMGATNPANADEGTIRKTFALSIGENSVHGSDAPETAAEEIAYWFSGTEIVG.

Residues K11, F59, R87, T93, R104, and N114 each coordinate ATP. H117 serves as the catalytic Pros-phosphohistidine intermediate.

The protein belongs to the NDK family. Homotetramer. Requires Mg(2+) as cofactor.

Its subcellular location is the cytoplasm. The catalysed reaction is a 2'-deoxyribonucleoside 5'-diphosphate + ATP = a 2'-deoxyribonucleoside 5'-triphosphate + ADP. It catalyses the reaction a ribonucleoside 5'-diphosphate + ATP = a ribonucleoside 5'-triphosphate + ADP. Functionally, major role in the synthesis of nucleoside triphosphates other than ATP. The ATP gamma phosphate is transferred to the NDP beta phosphate via a ping-pong mechanism, using a phosphorylated active-site intermediate. This Brucella canis (strain ATCC 23365 / NCTC 10854 / RM-666) protein is Nucleoside diphosphate kinase.